We begin with the raw amino-acid sequence, 193 residues long: Large ribosomal subunit protein bL12cy (193 aa).

Residues 1–59 (MAATTLSIATTIRSSSFSSGLASAHHFPSRPLSIEFPFSFGVSSSSTLSHRAIYLHPIS) constitute a chloroplast transit peptide. Residues 170–187 (GVTKDEAEEDKTQLEEAG) are compositionally biased toward basic and acidic residues. A disordered region spans residues 170 to 193 (GVTKDEAEEDKTQLEEAGAKVSIV).

This sequence belongs to the bacterial ribosomal protein bL12 family.

It localises to the plastid. The protein localises to the chloroplast. In Arabidopsis thaliana (Mouse-ear cress), this protein is Large ribosomal subunit protein bL12cy (RPL12B).